Here is a 452-residue protein sequence, read N- to C-terminus: Type II methyltransferase M.EcaI (452 aa).

The protein belongs to the N(4)/N(6)-methyltransferase family.

It carries out the reaction a 2'-deoxyadenosine in DNA + S-adenosyl-L-methionine = an N(6)-methyl-2'-deoxyadenosine in DNA + S-adenosyl-L-homocysteine + H(+). A beta subtype methylase, recognizes the double-stranded sequence 5'-GGTNACC-3', methylates A-5 on both strands and protects the DNA from cleavage by the EcaI endonuclease. The sequence is that of Type II methyltransferase M.EcaI (ecaIM) from Enterobacter cloacae.